Here is a 399-residue protein sequence, read N- to C-terminus: Type II secretion system protein L (399 aa).

Over 1-247 the chain is Cytoplasmic; it reads MSKAENTSGK…VKPWKQALLP (247 aa). A helical membrane pass occupies residues 248–264; it reads WRNVLIALSAWLLLVLG. The Periplasmic segment spans residues 265–399; it reads ESVWTHYQWY…EGQLTLRSQP (135 aa).

The protein belongs to the GSP L family. In terms of assembly, type II secretion system is composed of four main components: the outer membrane complex, the inner membrane complex, the cytoplasmic secretion ATPase and the periplasm-spanning pseudopilus. Forms homodimers. Interacts with OutM/GspM. Interacts with OutE/GspE and OutF/GspF.

The protein resides in the cell inner membrane. Functionally, inner membrane component of the type II secretion system required for the energy-dependent secretion of extracellular factors such as proteases and toxins from the periplasm. Plays a role in the complex assembly and recruits OutM resulting in a stable complex in the inner membrane. Provides thus a link between the energy-providing OutE protein in the cytoplasm and the rest of the T2SS machinery. The protein is Type II secretion system protein L (outL) of Dickeya chrysanthemi (Pectobacterium chrysanthemi).